Reading from the N-terminus, the 453-residue chain is Ribosomal protein uS12 methylthiotransferase RimO (453 aa).

Residues 6-116 (PTVGIVSLGC…VLTAVHEAIA (111 aa)) form the MTTase N-terminal domain. Residues C15, C51, C80, C148, C152, and C155 each contribute to the [4Fe-4S] cluster site. One can recognise a Radical SAM core domain in the interval 134–371 (LTPKHFAYLK…MQLQQQISAN (238 aa)). One can recognise a TRAM domain in the interval 374-440 (QAKIGKTIQV…EYDLWATPVG (67 aa)).

This sequence belongs to the methylthiotransferase family. RimO subfamily. Requires [4Fe-4S] cluster as cofactor.

Its subcellular location is the cytoplasm. The catalysed reaction is L-aspartate(89)-[ribosomal protein uS12]-hydrogen + (sulfur carrier)-SH + AH2 + 2 S-adenosyl-L-methionine = 3-methylsulfanyl-L-aspartate(89)-[ribosomal protein uS12]-hydrogen + (sulfur carrier)-H + 5'-deoxyadenosine + L-methionine + A + S-adenosyl-L-homocysteine + 2 H(+). Catalyzes the methylthiolation of an aspartic acid residue of ribosomal protein uS12. The polypeptide is Ribosomal protein uS12 methylthiotransferase RimO (Hydrogenovibrio crunogenus (strain DSM 25203 / XCL-2) (Thiomicrospira crunogena)).